Here is a 124-residue protein sequence, read N- to C-terminus: Ribonuclease pancreatic (124 aa).

The disordered stretch occupies residues 1–21 (AESSAMKFQRQHMDSDGHPDT). The substrate site is built by K7 and R10. H12 serves as the catalytic Proton acceptor. 4 cysteine pairs are disulfide-bonded: C26–C84, C40–C95, C58–C110, and C65–C72. Substrate contacts are provided by residues 41–45 (KPVNT), K66, and R85. Residue H119 is the Proton donor of the active site.

This sequence belongs to the pancreatic ribonuclease family. As to quaternary structure, monomer. Interacts with and forms tight 1:1 complexes with RNH1. Dimerization of two such complexes may occur. Interaction with RNH1 inhibits this protein. In terms of tissue distribution, pancreas.

The protein localises to the secreted. The catalysed reaction is an [RNA] containing cytidine + H2O = an [RNA]-3'-cytidine-3'-phosphate + a 5'-hydroxy-ribonucleotide-3'-[RNA].. It catalyses the reaction an [RNA] containing uridine + H2O = an [RNA]-3'-uridine-3'-phosphate + a 5'-hydroxy-ribonucleotide-3'-[RNA].. Functionally, endonuclease that catalyzes the cleavage of RNA on the 3' side of pyrimidine nucleotides. Acts on single-stranded and double-stranded RNA. This chain is Ribonuclease pancreatic (RNASE1), found in Galea musteloides (Common yellow-toothed cavy).